The sequence spans 117 residues: Large ribosomal subunit protein uL18 (117 aa).

It belongs to the universal ribosomal protein uL18 family. In terms of assembly, part of the 50S ribosomal subunit; part of the 5S rRNA/L5/L18/L25 subcomplex. Contacts the 5S and 23S rRNAs.

Functionally, this is one of the proteins that bind and probably mediate the attachment of the 5S RNA into the large ribosomal subunit, where it forms part of the central protuberance. The sequence is that of Large ribosomal subunit protein uL18 from Neisseria gonorrhoeae (strain ATCC 700825 / FA 1090).